The primary structure comprises 526 residues: Peptide chain release factor 3 (526 aa).

The tr-type G domain occupies 9 to 277 (NKRRTFAIIS…DFVEYAPGPQ (269 aa)). Residues 18-25 (SHPDAGKT), 86-90 (DTPGH), and 140-143 (NKLD) contribute to the GTP site.

Belongs to the TRAFAC class translation factor GTPase superfamily. Classic translation factor GTPase family. PrfC subfamily.

It is found in the cytoplasm. Its function is as follows. Increases the formation of ribosomal termination complexes and stimulates activities of RF-1 and RF-2. It binds guanine nucleotides and has strong preference for UGA stop codons. It may interact directly with the ribosome. The stimulation of RF-1 and RF-2 is significantly reduced by GTP and GDP, but not by GMP. The sequence is that of Peptide chain release factor 3 from Legionella pneumophila (strain Corby).